The chain runs to 289 residues: Probable vesicular-fusion protein sec17 homolog (289 aa).

S76 bears the Phosphoserine mark.

This sequence belongs to the SNAP family.

The protein localises to the membrane. In terms of biological role, required for vesicular transport between the endoplasmic reticulum and the Golgi apparatus. This Schizosaccharomyces pombe (strain 972 / ATCC 24843) (Fission yeast) protein is Probable vesicular-fusion protein sec17 homolog (sec17).